The chain runs to 671 residues: tRNA(Met) cytidine acetyltransferase TmcA (671 aa).

ATP-binding positions include glutamine 180, 202 to 211, and arginine 319; that span reads GRGKSALAGQ. Positions 356–531 constitute an N-acetyltransferase domain; that stretch reads QTLWQSDPET…SGCYTAMALL (176 aa). Acetyl-CoA-binding positions include 461-463, 468-474, glutamate 499, and arginine 506; these read IAV and QREGTGR.

Belongs to the RNA cytidine acetyltransferase family. TmcA subfamily.

The protein resides in the cytoplasm. The enzyme catalyses cytidine(34) in elongator tRNA(Met) + acetyl-CoA + ATP + H2O = N(4)-acetylcytidine(34) in elongator tRNA(Met) + ADP + phosphate + CoA + H(+). It carries out the reaction 2-hydroxyisobutanoyl-CoA + L-lysyl-[protein] = N(6)-(2-hydroxyisobutanoyl)-L-lysyl-[protein] + CoA + H(+). With respect to regulation, ATP/GTP hydrolysis is stimulated by the addition of acetyl-CoA and tRNA(Met). Binding of acetyl-CoA to TmcA activates both ATPase and tRNA-binding activities. ATP promotes the 2-hydroxyisobutyryltransferase activity. In terms of biological role, catalyzes the formation of N(4)-acetylcytidine (ac(4)C) at the wobble position of tRNA(Met), by using acetyl-CoA as an acetyl donor and ATP (or GTP). It recognizes the wobble base of tRNA(Met), thus distinguishing between tRNA(Met) and the structurally similar tRNA(Ile2). Could use an RNA helicase motor driven by ATP hydrolysis to deliver the wobble base of tRNA(Met) to the acetyltransferase domain of TmcA. Also functions as a lysine 2-hydroxyisobutyryltransferase to regulate transcription. Can specifically catalyze the 2-hydroxyisobutyrylation (Khib) of the DNA-binding protein H-NS. Hydroxyisobutyrylation of H-NS decreases its DNA-binding activity, promotes the expression of acid-resistance genes and enhances bacterial survival under extreme acid stress. This chain is tRNA(Met) cytidine acetyltransferase TmcA, found in Escherichia coli (strain K12).